The chain runs to 593 residues: Class E vacuolar protein-sorting machinery protein HSE1 (593 aa).

The VHS domain occupies Ala-15–Glu-144. The disordered stretch occupies residues Leu-136–Pro-251. A compositionally biased stretch (basic and acidic residues) spans Pro-151–Leu-171. The UIM domain maps to Ala-162–Arg-181. A compositionally biased stretch (polar residues) spans Ile-175–Glu-193. The segment covering Thr-194 to Gln-227 has biased composition (low complexity). The span at His-232 to His-241 shows a compositional bias: polar residues. The SH3 domain maps to Ala-252–Asp-311. The tract at residues Arg-474–His-593 is disordered. Polar residues predominate over residues Gln-504 to Ser-521. Basic and acidic residues predominate over residues Pro-523–Ser-539. Residues Glu-540–His-552 are compositionally biased toward low complexity. Residues Pro-566 to His-593 are compositionally biased toward polar residues.

This sequence belongs to the STAM family. In terms of assembly, component of the ESCRT-0 complex composed of HSE1 and VPS27.

The protein localises to the endosome membrane. In terms of biological role, component of the ESCRT-0 complex which is the sorting receptor for ubiquitinated cargo proteins at the multivesicular body (MVB). The polypeptide is Class E vacuolar protein-sorting machinery protein HSE1 (HSE1) (Mycosarcoma maydis (Corn smut fungus)).